The following is a 156-amino-acid chain: 6,7-dimethyl-8-ribityllumazine synthase (156 aa).

Residues Phe-23, 57–59, and 81–83 contribute to the 5-amino-6-(D-ribitylamino)uracil site; these read AFE and AVI. (2S)-2-hydroxy-3-oxobutyl phosphate is bound at residue 86–87; that stretch reads AT. His-89 functions as the Proton donor in the catalytic mechanism. 5-amino-6-(D-ribitylamino)uracil is bound at residue Phe-114. Residue Arg-128 participates in (2S)-2-hydroxy-3-oxobutyl phosphate binding.

The protein belongs to the DMRL synthase family.

The catalysed reaction is (2S)-2-hydroxy-3-oxobutyl phosphate + 5-amino-6-(D-ribitylamino)uracil = 6,7-dimethyl-8-(1-D-ribityl)lumazine + phosphate + 2 H2O + H(+). It functions in the pathway cofactor biosynthesis; riboflavin biosynthesis; riboflavin from 2-hydroxy-3-oxobutyl phosphate and 5-amino-6-(D-ribitylamino)uracil: step 1/2. In terms of biological role, catalyzes the formation of 6,7-dimethyl-8-ribityllumazine by condensation of 5-amino-6-(D-ribitylamino)uracil with 3,4-dihydroxy-2-butanone 4-phosphate. This is the penultimate step in the biosynthesis of riboflavin. The chain is 6,7-dimethyl-8-ribityllumazine synthase from Sulfurovum sp. (strain NBC37-1).